The following is a 224-amino-acid chain: Ornithine decarboxylase antizyme (224 aa).

This sequence belongs to the ODC antizyme family. In terms of assembly, interacts with ODC and thereby sterically blocks ODC homodimerization.

Ornithine decarboxylase (ODC) antizyme protein that negatively regulates ODC activity and intracellular polyamine biosynthesis in response to increased intracellular polyamine levels. Binds to ODC monomers, inhibiting the assembly of the functional ODC homodimer, and targets the monomers for ubiquitin-independent proteolytic destruction by the 26S proteasome. This chain is Ornithine decarboxylase antizyme (spa1), found in Schizosaccharomyces octosporus (Fission yeast).